A 1071-amino-acid polypeptide reads, in one-letter code: DNA-directed RNA polymerase subunit beta (1071 aa).

The protein belongs to the RNA polymerase beta chain family. In plastids the minimal PEP RNA polymerase catalytic core is composed of four subunits: alpha, beta, beta', and beta''. When a (nuclear-encoded) sigma factor is associated with the core the holoenzyme is formed, which can initiate transcription.

It localises to the plastid. The protein resides in the chloroplast. It carries out the reaction RNA(n) + a ribonucleoside 5'-triphosphate = RNA(n+1) + diphosphate. Its function is as follows. DNA-dependent RNA polymerase catalyzes the transcription of DNA into RNA using the four ribonucleoside triphosphates as substrates. In Panax ginseng (Korean ginseng), this protein is DNA-directed RNA polymerase subunit beta.